An 82-amino-acid polypeptide reads, in one-letter code: Small ribosomal subunit protein bS16 (82 aa).

The protein belongs to the bacterial ribosomal protein bS16 family.

The protein is Small ribosomal subunit protein bS16 of Erwinia tasmaniensis (strain DSM 17950 / CFBP 7177 / CIP 109463 / NCPPB 4357 / Et1/99).